The chain runs to 343 residues: L-ornithine/L-arginine 3-hydroxylase (343 aa).

Fe cation contacts are provided by H147 and E149. Residues 199–215 (MPDNSHLPQNTAESTGD) show a composition bias toward polar residues. The tract at residues 199–218 (MPDNSHLPQNTAESTGDPTK) is disordered. Residue H302 participates in Fe cation binding. A 2-oxoglutarate-binding site is contributed by R316.

Belongs to the clavaminate synthase family. Requires Fe(2+) as cofactor.

The enzyme catalyses L-ornithine + 2-oxoglutarate + O2 = (3S)-3-hydroxy-L-ornithine + succinate + CO2. It carries out the reaction L-arginine + 2-oxoglutarate + O2 = (2S,3S)-hydroxyarginine + succinate + CO2. Alpha-ketoglutarate-dependent dioxygenase that in vitro catalyzes the regio- and stereoselective hydroxylation of L-ornithine and L-arginine, leading to (3S)-3-hydroxy-L-ornithine and (3S)-3-hydroxy-L-arginine, respectively. Cannot use L-lysine, D-ornithine, or D-arginine as substrate. This is L-ornithine/L-arginine 3-hydroxylase from Catenulispora acidiphila (strain DSM 44928 / JCM 14897 / NBRC 102108 / NRRL B-24433 / ID139908).